Consider the following 212-residue polypeptide: Endothelin-1 (212 aa).

Residues 1–17 (MDYLLMIFSLLFVACQG) form the signal peptide. A propeptide spanning residues 18–50 (APETAVLGAELSAVGENGGEKPTPSPPWRLRRS) is cleaved from the precursor. Cystine bridges form between cysteine 53–cysteine 67 and cysteine 55–cysteine 63. The propeptide occupies 74-212 (VNTPEHVVPY…RYVTHNRAHW (139 aa)). Residues 109-123 (CQCASQKDKKCWNFC) form an endothelin-like region. Basic and acidic residues-rich tracts occupy residues 168-181 (RSSE…RSET) and 189-205 (SFHD…ERYV). Residues 168–212 (RSSEEHLRQTRSETMRNSVKSSFHDPKLKGKPSRERYVTHNRAHW) form a disordered region.

This sequence belongs to the endothelin/sarafotoxin family. Expressed in lung, placental stem villi vessels and in cultured placental vascular smooth muscle cells.

Its subcellular location is the secreted. Endothelins are endothelium-derived vasoconstrictor peptides. Probable ligand for G-protein coupled receptors EDNRA and EDNRB which activates PTK2B, BCAR1, BCAR3 and, GTPases RAP1 and RHOA cascade in glomerular mesangial cells. Also binds the DEAR/FBXW7-AS1 receptor. Promotes mesenteric arterial wall remodeling via activation of ROCK signaling and subsequent colocalization of NFATC3 with F-actin filaments. NFATC3 then translocates to the nucleus where it subsequently promotes the transcription of the smooth muscle hypertrophy and differentiation marker ACTA2. The protein is Endothelin-1 (EDN1) of Homo sapiens (Human).